Reading from the N-terminus, the 211-residue chain is Urease accessory protein UreG (211 aa).

11–18 (GPVGAGKT) is a GTP binding site.

It belongs to the SIMIBI class G3E GTPase family. UreG subfamily. As to quaternary structure, homodimer. UreD, UreF and UreG form a complex that acts as a GTP-hydrolysis-dependent molecular chaperone, activating the urease apoprotein by helping to assemble the nickel containing metallocenter of UreC. The UreE protein probably delivers the nickel.

The protein localises to the cytoplasm. In terms of biological role, facilitates the functional incorporation of the urease nickel metallocenter. This process requires GTP hydrolysis, probably effectuated by UreG. The sequence is that of Urease accessory protein UreG from Actinobacillus pleuropneumoniae serotype 5b (strain L20).